Consider the following 183-residue polypeptide: Protein US32 (183 aa).

This sequence belongs to the herpesviridae US1 family.

This chain is Protein US32 (US32), found in Homo sapiens (Human).